A 120-amino-acid chain; its full sequence is Large ribosomal subunit protein bL19 (120 aa).

Belongs to the bacterial ribosomal protein bL19 family.

Functionally, this protein is located at the 30S-50S ribosomal subunit interface and may play a role in the structure and function of the aminoacyl-tRNA binding site. This Chlorobium phaeobacteroides (strain DSM 266 / SMG 266 / 2430) protein is Large ribosomal subunit protein bL19.